Here is a 226-residue protein sequence, read N- to C-terminus: 3-isopropylmalate dehydratase small subunit (226 aa).

The disordered stretch occupies residues 204 to 226; it reads EAETVESAREPEAVEWAGPLADR.

It belongs to the LeuD family. LeuD type 1 subfamily. In terms of assembly, heterodimer of LeuC and LeuD.

It catalyses the reaction (2R,3S)-3-isopropylmalate = (2S)-2-isopropylmalate. Its pathway is amino-acid biosynthesis; L-leucine biosynthesis; L-leucine from 3-methyl-2-oxobutanoate: step 2/4. Its function is as follows. Catalyzes the isomerization between 2-isopropylmalate and 3-isopropylmalate, via the formation of 2-isopropylmaleate. This is 3-isopropylmalate dehydratase small subunit from Bifidobacterium animalis subsp. lactis (strain AD011).